Here is a 621-residue protein sequence, read N- to C-terminus: Chaperone protein HscA homolog (621 aa).

The protein belongs to the heat shock protein 70 family.

In terms of biological role, chaperone involved in the maturation of iron-sulfur cluster-containing proteins. Has a low intrinsic ATPase activity which is markedly stimulated by HscB. In Polynucleobacter necessarius subsp. necessarius (strain STIR1), this protein is Chaperone protein HscA homolog.